Consider the following 223-residue polypeptide: Serine/threonine/tyrosine-interacting protein (223 aa).

The Tyrosine-protein phosphatase domain maps to 28–176; the sequence is EMQEILPGLF…LQEYEAIYLA (149 aa). The Interaction with FBXW7 signature appears at 76 to 78; it reads FQQ. 3 positions are modified to phosphoserine: Ser-184, Ser-193, and Ser-201. The interval 197 to 223 is disordered; it reads GTTGSLKRTHEEEDDFGTMQVATAQNG.

This sequence belongs to the protein-tyrosine phosphatase family. Non-receptor class subfamily. As to quaternary structure, interacts with MAPK1; independently of MAPK1 phosphorylation status. Interacts with CARHSP1/Crhsp-24. Interacts (via FQQ motif) with FBXW7 (via F-box domain); the interaction is direct and prevents FBXW7 interaction with SKP1, a component of the SCF(FBXW7) complex.

It is found in the nucleus. The protein localises to the cytoplasm. The protein resides in the cytosol. Its function is as follows. Catalytically inactive phosphatase. Acts as a nuclear anchor for MAPK1/MAPK3 (ERK1/ERK2). Modulates cell-fate decisions and cell migration by spatiotemporal regulation of MAPK1/MAPK3 (ERK1/ERK2). By binding to the F-box of FBXW7, prevents the assembly of FBXW7 into the SCF E3 ubiquitin-protein ligase complex, and thereby inhibits degradation of its substrates. Plays a role in spermatogenesis. The sequence is that of Serine/threonine/tyrosine-interacting protein (STYX) from Pongo abelii (Sumatran orangutan).